Reading from the N-terminus, the 572-residue chain is MASAKTYVTKFKSFVILFFAPILLLPLIILVPDKFARCAYVIILMAIYWCTDVIPVAITSLLPVLLFPLLKVLDSKQVCVQYMTDTNMLFLGSLIVATAVERWELHKRIALRMLLFVGTKPSRLMLGFMFVTAFLSMWISNTATTAMMIPIVEAMLEQMVATNVAVDASQRTMELLDKNKASELPGSQVVFEDPSVQKQEDEETKNMYKAMNLCVCYAASIGGTATLTGTGPNVVLLGQMQELFPDSKDVMNFASWFAFALPNMLLMLVMAWLWLLCFYMRPNLKKTCICCGRKKKDTEKIASKVLYEEYRKLGPLSYAECNVLFCFGLLIILWFSRDPGFMPGWLSIAWIEGNTKHVTDATVAIFVAILLFIVPSQKPKFNFSRQTEEERKTPFYPPPLLNWKVTQEKVPWGIVLLLGGGFAMAKGCETSGLSEWMARQMEPLSSVRPAIITLILSCIVAMTTECTSNVATTTLFLPIFASMARSIGIHPLYVMIPCTLSASLAFMLPVATPPNAIVFAYGHLKVIDMVKTGLVMNILGIASVFLSVNTWGRAVFNLDKFPDWANLTHINT.

A run of 8 helical transmembrane segments spans residues Ser13–Asp33, Val53–Leu73, Val80–Val100, Leu124–Thr144, Ala218–Gly238, Ser255–Leu275, Pro315–Phe335, and His357–Gln377. Asn382 is a glycosylation site (N-linked (GlcNAc...) asparagine). Helical transmembrane passes span Val410–Thr430, Pro443–Thr463, Pro491–Ala511, and Thr532–Gly552. An N-linked (GlcNAc...) asparagine glycan is attached at Asn566.

Belongs to the SLC13A/DASS transporter (TC 2.A.47) family. NADC subfamily. As to quaternary structure, homodimer. As to expression, expressed in liver, testis and brain.

Its subcellular location is the cell membrane. It catalyses the reaction citrate(out) + 4 Na(+)(out) = citrate(in) + 4 Na(+)(in). With respect to regulation, inhibited by Li(+). High-affinity sodium/citrate cotransporter that mediates citrate entry into cells, which is a critical participant of biochemical pathways. May function in various metabolic processes in which citrate has a critical role such as energy production (Krebs cycle), fatty acid synthesis, cholesterol synthesis, glycolysis, and gluconeogenesis. Transports citrate into the cell in a Na(+)-dependent manner, recognizing the trivalent form of citrate (physiological pH) rather than the divalent form. Can recognize succinate as a substrate, but its affinity for succinate is several fold lower than for citrate. The stoichiometry is probably 4 Na(+) for each carboxylate, irrespective of whether the translocated substrate is divalent or trivalent, rendering the process electrogenic. Involved in the regulation of citrate levels in the brain. This chain is Na(+)/citrate cotransporter (Slc13a5), found in Rattus norvegicus (Rat).